The chain runs to 354 residues: AT-hook motif nuclear-localized protein 11 (354 aa).

Disordered regions lie at residues 1–158 (MDRR…MMPS) and 290–354 (KREE…LMRG). 2 stretches are compositionally biased toward low complexity: residues 46-55 (NSISPFGSNP) and 75-96 (VDSS…PPSG). The short motif at 101-109 (KRKRGRPRK) is the Bipartite nuclear localization signal element. Residues 101–113 (KRKRGRPRKYGQD) constitute a DNA-binding region (a.T hook 1). Residues 122 to 133 (SPSISNVSPNSN) are compositionally biased toward low complexity. The a.T hook 2 DNA-binding region spans 134–146 (KRGRGRPPGSGKK). Positions 159 to 302 (STGMSFTPHV…ETSEDVQDTD (144 aa)) constitute a PPC domain. Positions 294-303 (TSEDVQDTDA) are enriched in acidic residues. Polar residues predominate over residues 304-327 (LENNNDNTAATSPPVPQQSQNIVQ). The span at 340–354 (MDMHHPHMDIDLMRG) shows a compositional bias: basic and acidic residues.

The protein resides in the nucleus. In terms of biological role, transcription factor that specifically binds AT-rich DNA sequences related to the nuclear matrix attachment regions (MARs). The protein is AT-hook motif nuclear-localized protein 11 of Arabidopsis thaliana (Mouse-ear cress).